The primary structure comprises 165 residues: Large ribosomal subunit protein uL10 (165 aa).

The protein belongs to the universal ribosomal protein uL10 family. Part of the ribosomal stalk of the 50S ribosomal subunit. The N-terminus interacts with L11 and the large rRNA to form the base of the stalk. The C-terminus forms an elongated spine to which L12 dimers bind in a sequential fashion forming a multimeric L10(L12)X complex.

In terms of biological role, forms part of the ribosomal stalk, playing a central role in the interaction of the ribosome with GTP-bound translation factors. This Burkholderia cenocepacia (strain HI2424) protein is Large ribosomal subunit protein uL10.